A 532-amino-acid chain; its full sequence is Phosphoenolpyruvate carboxykinase (ATP) (532 aa).

3 residues coordinate substrate: arginine 60, tyrosine 195, and lysine 201. Residues lysine 201, histidine 221, and 237-245 each bind ATP; that span reads GLSGTGKTT. 2 residues coordinate Mn(2+): lysine 201 and histidine 221. Residue aspartate 258 participates in Mn(2+) binding. Positions 287, 323, and 448 each coordinate ATP. Residue arginine 323 coordinates substrate.

It belongs to the phosphoenolpyruvate carboxykinase (ATP) family. Requires Mn(2+) as cofactor.

It is found in the cytoplasm. The catalysed reaction is oxaloacetate + ATP = phosphoenolpyruvate + ADP + CO2. The protein operates within carbohydrate biosynthesis; gluconeogenesis. Involved in the gluconeogenesis. Catalyzes the conversion of oxaloacetate (OAA) to phosphoenolpyruvate (PEP) through direct phosphoryl transfer between the nucleoside triphosphate and OAA. The sequence is that of Phosphoenolpyruvate carboxykinase (ATP) from Christiangramia forsetii (strain DSM 17595 / CGMCC 1.15422 / KT0803) (Gramella forsetii).